We begin with the raw amino-acid sequence, 508 residues long: N-acetyl-D-hexosamine oxidase (508 aa).

In terms of domain architecture, FAD-binding PCMH-type spans 26–203 (TDAQAAGRIA…TAYTFARLPE (178 aa)). A cross-link (6-(S-cysteinyl)-8alpha-(pros-histidyl)-FAD (His-Cys)) is located at residues 64 to 123 (HCYEDFVSNNPDGAIVDLSLLNAPEVRADGTVRIPAGTQNWNGYLELYKRHNLTLPGGSC).

This sequence belongs to the oxygen-dependent FAD-linked oxidoreductase family. Requires FAD as cofactor.

It catalyses the reaction N-acetyl-D-glucosamine + O2 + H2O = N-acetyl-D-glucosaminate + H2O2 + H(+). It carries out the reaction N-acetyl-D-galactosamine + O2 + H2O = N-acetyl-D-galactosaminate + H2O2 + H(+). The catalysed reaction is N-acetyl-D-glucosamine + O2 = N-acetyl-D-glucosamino-1,5-lactone + H2O2. The enzyme catalyses N-acetyl-D-galactosamine + O2 = N-acetyl-D-galactosamino-1,5-lactone + H2O2. In terms of biological role, catalyzes the oxidation of a range of monosaccharides in vitro, displaying the highest activity with N-acetylglucosamine (GlcNAc) and N-acetylgalactosamine (GalNAc), with a reduction of O2 to H2O2. Acts upon the C1 carbon of the GlcNAc or GalNAc molecule, producing the corresponding lactone, which can spontaneously hydrolyze. Its biological function is unclear, but its main function might be connected to extracellular production of hydrogen peroxide to compete with other organisms through oxidative stress, or support the action of peroxidases and peroxygenases. The polypeptide is N-acetyl-D-hexosamine oxidase (Ralstonia solanacearum (strain UW551)).